We begin with the raw amino-acid sequence, 336 residues long: Glyceraldehyde-3-phosphate dehydrogenase (336 aa).

Residues 12 to 13, aspartate 34, arginine 78, and serine 120 each bind NAD(+); that span reads RI. Residues 151-153 and threonine 182 contribute to the D-glyceraldehyde 3-phosphate site; that span reads SCT. Cysteine 152 acts as the Nucleophile in catalysis. Asparagine 183 contacts NAD(+). D-glyceraldehyde 3-phosphate contacts are provided by residues 211 to 212 and arginine 234; that span reads NG. Asparagine 316 lines the NAD(+) pocket.

Belongs to the glyceraldehyde-3-phosphate dehydrogenase family. As to quaternary structure, homotetramer.

Its subcellular location is the cytoplasm. It catalyses the reaction D-glyceraldehyde 3-phosphate + phosphate + NAD(+) = (2R)-3-phospho-glyceroyl phosphate + NADH + H(+). It participates in carbohydrate degradation; glycolysis; pyruvate from D-glyceraldehyde 3-phosphate: step 1/5. In terms of biological role, catalyzes the oxidative phosphorylation of glyceraldehyde 3-phosphate (G3P) to 1,3-bisphosphoglycerate (BPG) using the cofactor NAD. The first reaction step involves the formation of a hemiacetal intermediate between G3P and a cysteine residue, and this hemiacetal intermediate is then oxidized to a thioester, with concomitant reduction of NAD to NADH. The reduced NADH is then exchanged with the second NAD, and the thioester is attacked by a nucleophilic inorganic phosphate to produce BPG. The sequence is that of Glyceraldehyde-3-phosphate dehydrogenase (gap) from Heyndrickxia coagulans (Weizmannia coagulans).